The following is a 409-amino-acid chain: Argininosuccinate synthase (409 aa).

ATP contacts are provided by residues 11–19 and alanine 38; that span reads AYSGGLDTS. L-citrulline is bound by residues tyrosine 91 and serine 96. An ATP-binding site is contributed by glycine 121. Residues threonine 123, asparagine 127, and aspartate 128 each contribute to the L-aspartate site. Residue asparagine 127 coordinates L-citrulline. 5 residues coordinate L-citrulline: arginine 131, serine 182, serine 191, glutamate 267, and tyrosine 279.

The protein belongs to the argininosuccinate synthase family. Type 1 subfamily. Homotetramer.

The protein resides in the cytoplasm. The catalysed reaction is L-citrulline + L-aspartate + ATP = 2-(N(omega)-L-arginino)succinate + AMP + diphosphate + H(+). It functions in the pathway amino-acid biosynthesis; L-arginine biosynthesis; L-arginine from L-ornithine and carbamoyl phosphate: step 2/3. The chain is Argininosuccinate synthase from Xanthobacter autotrophicus (strain ATCC BAA-1158 / Py2).